Reading from the N-terminus, the 843-residue chain is Major vault protein alpha (843 aa).

Residue A2 is modified to N-acetylalanine. MVP repeat units follow at residues 2–56 (ADLN…IPQR), 57–111 (NYCT…KVTA), 112–163 (LQVV…EEIK), 164–216 (ATII…EIVN), 217–272 (AYVL…GEVH), 273–324 (ITTL…IHNI), 325–376 (YVLT…KRES), 377–442 (IPLD…STRV), and 443–505 (VTYR…FLGP). The segment at 643-663 (QEAAARHEAERLEQGARGRLE) is disordered. The span at 646–663 (AARHEAERLEQGARGRLE) shows a compositional bias: basic and acidic residues.

In terms of assembly, the vault ribonucleoprotein particle is a huge (400 A x 670 A) cage structure of 12.9 MDa. It consists of a dimer of half-vaults, with each half-vault comprising 39 identical major vault protein (MVP) chains. Dictyostelium is one of the few organisms in which the major component is actually two proteins (alpha and beta).

It is found in the cytoplasm. The protein localises to the nucleus. In terms of biological role, unknown, though MVP-alpha is required for normal vault structure. In Dictyostelium discoideum (Social amoeba), this protein is Major vault protein alpha (mvpA).